The primary structure comprises 532 residues: Glutamate--cysteine ligase (532 aa).

The protein belongs to the glutamate--cysteine ligase type 1 family. Type 1 subfamily.

The catalysed reaction is L-cysteine + L-glutamate + ATP = gamma-L-glutamyl-L-cysteine + ADP + phosphate + H(+). It functions in the pathway sulfur metabolism; glutathione biosynthesis; glutathione from L-cysteine and L-glutamate: step 1/2. This is Glutamate--cysteine ligase from Pseudomonas fluorescens (strain ATCC BAA-477 / NRRL B-23932 / Pf-5).